The following is a 63-amino-acid chain: Large ribosomal subunit protein bL32 (63 aa).

The segment covering 1–18 (MAHPKRRISRSRRDKRRA) has biased composition (basic residues). The disordered stretch occupies residues 1–27 (MAHPKRRISRSRRDKRRAQYNAKTKAP).

Belongs to the bacterial ribosomal protein bL32 family.

This is Large ribosomal subunit protein bL32 from Chloroherpeton thalassium (strain ATCC 35110 / GB-78).